The sequence spans 310 residues: Junctional adhesion molecule C (310 aa).

The signal sequence occupies residues 1 to 31 (MALRRPPRLRLCARLPDFFLLLLFRGCLIGA). At 32 to 241 (VNLKSSNRTP…EQEMEVYDLN (210 aa)) the chain is on the extracellular side. The 93-residue stretch at 35 to 127 (KSSNRTPVVQ…VARNDRKEID (93 aa)) folds into the Ig-like V-type domain. Intrachain disulfides connect C53/C115 and C160/C219. N104 and N192 each carry an N-linked (GlcNAc...) asparagine glycan. The Ig-like C2-type domain occupies 139 to 236 (PVTPVCRVPK…SARCEEQEME (98 aa)). The helical transmembrane segment at 242–262 (IGGIIGGVLVVLAVLALITLG) threads the bilayer. Residues 263–310 (ICCAYRRGYFINNKQDGESYKNPGKPDGVNYIRTDEEGDFRHKSSFVI) are Cytoplasmic-facing. 2 S-palmitoyl cysteine lipidation sites follow: C264 and C265.

It belongs to the immunoglobulin superfamily. In terms of assembly, interacts with ITGAM. Interacts with GORASP2. In terms of processing, proteolytically cleaved from endothelial cells surface into a soluble form by ADAM10 and ADAM17; the release of soluble JAM3 is increased by pro-inflammatory factors. Post-translationally, S-palmitoylated by ZDHHC7. S-palmitoylation promotes expression at tight junctions. As to expression, detected on round and elongated spermatids (at protein level). Highest expression in placenta, brain and kidney. Significant expression is detected on platelets. Expressed in intestinal mucosa cells. Expressed in the vascular endothelium. Found in serum (at protein level). Also detected in the synovial fluid of patients with rheumatoid arthritis, psoriatic arthritis or ostearthritis (at protein level).

The protein localises to the cell membrane. The protein resides in the cell junction. It localises to the desmosome. It is found in the tight junction. Its subcellular location is the secreted. Functionally, junctional adhesion protein that mediates heterotypic cell-cell interactions with its cognate receptor JAM2 to regulate different cellular processes. Plays a role in homing and mobilization of hematopoietic stem and progenitor cells within the bone marrow. At the surface of bone marrow stromal cells, it contributes to the retention of the hematopoietic stem and progenitor cells expressing JAM3. Plays a central role in leukocytes extravasation by facilitating transmigration through the endothelium. Plays a role in spermatogenesis where JAM2 and JAM3, which are respectively expressed by Sertoli and germ cells, mediate an interaction between both cell types and play an essential role in the anchorage of germ cells onto Sertoli cells and the assembly of cell polarity complexes during spermatid differentiation. Also functions as a counter-receptor for ITGAM, mediating leukocyte-platelet interactions and is involved in the regulation of transepithelial migration of polymorphonuclear neutrophils (PMN). Plays a role in angiogenesis. Plays a role in the regulation of cell migration. During myogenesis, it is involved in myocyte fusion. Promotes chemotaxis of vascular endothelial cells and stimulates angiogenesis. The chain is Junctional adhesion molecule C (JAM3) from Homo sapiens (Human).